We begin with the raw amino-acid sequence, 178 residues long: UPF0302 protein Bcer98_1244 (178 aa).

Belongs to the UPF0302 family.

The polypeptide is UPF0302 protein Bcer98_1244 (Bacillus cytotoxicus (strain DSM 22905 / CIP 110041 / 391-98 / NVH 391-98)).